A 361-amino-acid polypeptide reads, in one-letter code: Phosphoserine aminotransferase (361 aa).

Arg43 contacts L-glutamate. Residues 77 to 78 (AS), Trp103, Thr153, Asp172, and Gln195 each bind pyridoxal 5'-phosphate. Lys196 carries the post-translational modification N6-(pyridoxal phosphate)lysine. Residue 237–238 (NT) coordinates pyridoxal 5'-phosphate.

The protein belongs to the class-V pyridoxal-phosphate-dependent aminotransferase family. SerC subfamily. Homodimer. Pyridoxal 5'-phosphate is required as a cofactor.

It localises to the cytoplasm. The catalysed reaction is O-phospho-L-serine + 2-oxoglutarate = 3-phosphooxypyruvate + L-glutamate. It carries out the reaction 4-(phosphooxy)-L-threonine + 2-oxoglutarate = (R)-3-hydroxy-2-oxo-4-phosphooxybutanoate + L-glutamate. Its pathway is amino-acid biosynthesis; L-serine biosynthesis; L-serine from 3-phospho-D-glycerate: step 2/3. It functions in the pathway cofactor biosynthesis; pyridoxine 5'-phosphate biosynthesis; pyridoxine 5'-phosphate from D-erythrose 4-phosphate: step 3/5. Its function is as follows. Catalyzes the reversible conversion of 3-phosphohydroxypyruvate to phosphoserine and of 3-hydroxy-2-oxo-4-phosphonooxybutanoate to phosphohydroxythreonine. In Desulfotalea psychrophila (strain LSv54 / DSM 12343), this protein is Phosphoserine aminotransferase.